A 351-amino-acid polypeptide reads, in one-letter code: Glucose 1-dehydrogenase 1 (351 aa).

Cys39 is a Zn(2+) binding site. Thr41 is a binding site for substrate. The Zn(2+) site is built by His64 and Glu65. Residues Glu113 and Glu149 each coordinate substrate. A Zn(2+)-binding site is contributed by Glu149. NADP(+)-binding positions include 182-185 (AGPI), 265-267 (LGI), and 292-294 (ATN). Residue Asn294 participates in substrate binding.

This sequence belongs to the zinc-containing alcohol dehydrogenase family. Glucose 1-dehydrogenase subfamily. Requires Zn(2+) as cofactor.

The catalysed reaction is D-glucose + NAD(+) = D-glucono-1,5-lactone + NADH + H(+). It carries out the reaction D-glucose + NADP(+) = D-glucono-1,5-lactone + NADPH + H(+). In terms of biological role, catalyzes the NAD(P)(+)-dependent oxidation of D-glucose to D-gluconate via gluconolactone. Can utilize both NAD(+) and NADP(+) as electron acceptor. Is involved in the degradation of glucose through a non-phosphorylative variant of the Entner-Doudoroff pathway. The chain is Glucose 1-dehydrogenase 1 from Vulcanisaeta moutnovskia (strain 768-28).